The sequence spans 193 residues: dCTP deaminase (193 aa).

Residues 110–115 (RSSLAR), D128, 136–138 (VLE), Y171, K178, and Q182 each bind dCTP. Residue E138 is the Proton donor/acceptor of the active site. Positions 169–193 (RPYNRRQDAKYKDQQGAVASRIDKD) are disordered.

Belongs to the dCTP deaminase family. As to quaternary structure, homotrimer.

The enzyme catalyses dCTP + H2O + H(+) = dUTP + NH4(+). Its pathway is pyrimidine metabolism; dUMP biosynthesis; dUMP from dCTP (dUTP route): step 1/2. In terms of biological role, catalyzes the deamination of dCTP to dUTP. This Pectobacterium carotovorum subsp. carotovorum (strain PC1) protein is dCTP deaminase.